The following is a 208-amino-acid chain: uncharacterized protein (208 aa).

The interval 126–151 (VGSGSGSDSSSGSTSSPNTVNNYNSD) is disordered. The span at 131–141 (GSDSSSGSTSS) shows a compositional bias: low complexity.

This is an uncharacterized protein from Dictyostelium discoideum (Social amoeba).